A 226-amino-acid polypeptide reads, in one-letter code: uncharacterized protein (226 aa).

The ABC transporter domain occupies 4-226; the sequence is LQFQQVGYWY…FTVKENVAVV (223 aa). Residue 38–45 participates in ATP binding; that stretch reads GTSGTGKT.

Belongs to the ABC transporter superfamily.

This is an uncharacterized protein from Bacillus subtilis (strain 168).